A 448-amino-acid polypeptide reads, in one-letter code: Tubulin beta chain (448 aa).

GTP contacts are provided by Gln11, Glu69, Ser138, Gly142, Thr143, Gly144, Asn204, and Asn226. Residue Glu69 participates in Mg(2+) binding. Positions 426–448 (QDAGIDEEEEEYEEEAPVDEPLE) are disordered. Positions 429-448 (GIDEEEEEYEEEAPVDEPLE) are enriched in acidic residues.

The protein belongs to the tubulin family. Dimer of alpha and beta chains. A typical microtubule is a hollow water-filled tube with an outer diameter of 25 nm and an inner diameter of 15 nM. Alpha-beta heterodimers associate head-to-tail to form protofilaments running lengthwise along the microtubule wall with the beta-tubulin subunit facing the microtubule plus end conferring a structural polarity. Microtubules usually have 13 protofilaments but different protofilament numbers can be found in some organisms and specialized cells. Mg(2+) is required as a cofactor.

It is found in the cytoplasm. It localises to the cytoskeleton. Functionally, tubulin is the major constituent of microtubules, a cylinder consisting of laterally associated linear protofilaments composed of alpha- and beta-tubulin heterodimers. Microtubules grow by the addition of GTP-tubulin dimers to the microtubule end, where a stabilizing cap forms. Below the cap, tubulin dimers are in GDP-bound state, owing to GTPase activity of alpha-tubulin. This is Tubulin beta chain (TUB2) from Epichloe coenophiala (Tall fescue endophyte fungus).